Here is a 718-residue protein sequence, read N- to C-terminus: Phenylalanine--tRNA ligase beta subunit (718 aa).

Residues 39 to 153 (LNEISGIKFG…IFDLESNPLK (115 aa)) enclose the tRNA-binding domain. In terms of domain architecture, B5 spans 386–460 (SKKTFLDLNY…RFYGLEKLKD (75 aa)). Residues D438, D444, and D448 each coordinate Mg(2+).

The protein belongs to the phenylalanyl-tRNA synthetase beta subunit family. Type 1 subfamily. As to quaternary structure, tetramer of two alpha and two beta subunits. It depends on Mg(2+) as a cofactor.

The protein localises to the cytoplasm. It catalyses the reaction tRNA(Phe) + L-phenylalanine + ATP = L-phenylalanyl-tRNA(Phe) + AMP + diphosphate + H(+). This Mesomycoplasma hyopneumoniae (strain 7448) (Mycoplasma hyopneumoniae) protein is Phenylalanine--tRNA ligase beta subunit.